The chain runs to 206 residues: Small ribosomal subunit protein uS4 (206 aa).

Residues 96-156 form the S4 RNA-binding domain; sequence QRLDNVVYRM…EKSKTQARII (61 aa).

Belongs to the universal ribosomal protein uS4 family. As to quaternary structure, part of the 30S ribosomal subunit. Contacts protein S5. The interaction surface between S4 and S5 is involved in control of translational fidelity.

Functionally, one of the primary rRNA binding proteins, it binds directly to 16S rRNA where it nucleates assembly of the body of the 30S subunit. In terms of biological role, with S5 and S12 plays an important role in translational accuracy. This Pseudoalteromonas translucida (strain TAC 125) protein is Small ribosomal subunit protein uS4.